A 55-amino-acid polypeptide reads, in one-letter code: Beta-toxin Cn7 (55 aa).

Positions 1 to 55 (KEGYIVNYHDGCKYECYKLGDNDYCLRECKLRVGKGAGGYCYAFACWCTHLYEQA) constitute an LCN-type CS-alpha/beta domain. Intrachain disulfides connect cysteine 16–cysteine 41, cysteine 25–cysteine 46, and cysteine 29–cysteine 48.

The protein belongs to the long (3 C-C) scorpion toxin superfamily. Sodium channel inhibitor family. Beta subfamily. Expressed by the venom gland.

The protein resides in the secreted. Beta toxins bind voltage-independently at site-4 of sodium channels (Nav) and shift the voltage of activation toward more negative potentials thereby affecting sodium channel activation and promoting spontaneous and repetitive firing. This chain is Beta-toxin Cn7, found in Centruroides noxius (Mexican scorpion).